Here is a 187-residue protein sequence, read N- to C-terminus: Calmodulin-like protein 1 (187 aa).

Alanine 2 bears the N-acetylalanine mark. EF-hand domains follow at residues 8–43, 44–79, 81–116, and 117–152; these read EQIV…LGQN, PTEA…KLRD, DSEE…IGER, and LTDE…KKRR. Ca(2+) contacts are provided by aspartate 21, aspartate 23, aspartate 25, serine 27, glutamate 32, aspartate 57, aspartate 59, asparagine 61, asparagine 63, glutamate 68, aspartate 94, aspartate 96, asparagine 98, glutamate 105, aspartate 130, aspartate 132, aspartate 134, glutamine 136, and glutamate 141. A disordered region spans residues 153 to 187; it reads KRIEEKREHDGGSRTKSAGPSAAPASKRGQKCVIL. Residues 154 to 165 show a composition bias toward basic and acidic residues; that stretch reads RIEEKREHDGGS. Low complexity predominate over residues 169-178; it reads SAGPSAAPAS. Cysteine 184 bears the Cysteine methyl ester mark. Cysteine 184 is lipidated: S-farnesyl cysteine. The propeptide at 185–187 is removed in mature form; that stretch reads VIL.

The protein belongs to the calmodulin family. In terms of tissue distribution, expressed in roots, etiolated shoots and flowers.

It localises to the membrane. Functionally, calcium-binding protein that binds and activates CAMK1, a calcium/calmodulin-dependent kinase. The polypeptide is Calmodulin-like protein 1 (CML1) (Oryza sativa subsp. indica (Rice)).